We begin with the raw amino-acid sequence, 570 residues long: PTS system lactose-specific EIICB component (570 aa).

The region spanning 9 to 410 is the PTS EIIC type-3 domain; sequence IEKGKPFFEK…VVDIIIYYPF (402 aa). A run of 9 helical transmembrane segments spans residues 31-51, 65-85, 104-124, 133-153, 178-198, 223-243, 283-303, 340-360, and 382-402; these read GFIS…IAYV, AILM…VAGT, INFI…ASDP, AFMG…TVIV, FKDL…DLVI, GWIG…VGIH, MFIV…MFMW, VFFI…KLFV, and IIMG…LIVV. A PTS EIIB type-3 domain is found at 467–570; the sequence is QTNVLVLCAG…LDFVQQQFEN (104 aa). The Phosphocysteine intermediate; for EIIB activity role is filled by Cys474. Cys474 is subject to Phosphocysteine; by EIIA.

The protein localises to the cell membrane. It catalyses the reaction lactose(out) + N(pros)-phospho-L-histidyl-[protein] = lactose 6-phosphate(in) + L-histidyl-[protein]. Functionally, the phosphoenolpyruvate-dependent sugar phosphotransferase system (sugar PTS), a major carbohydrate active transport system, catalyzes the phosphorylation of incoming sugar substrates concomitantly with their translocation across the cell membrane. The enzyme II LacEF PTS system is involved in lactose transport. This is PTS system lactose-specific EIICB component from Staphylococcus aureus (strain N315).